Reading from the N-terminus, the 501-residue chain is Zinc finger C3HC-type protein 1 (501 aa).

Position 2 is an N-acetylalanine (Ala2). Residues 21 to 73 are disordered; sequence VVRSPEGTPQKVRELIDEGIVPEEGGTEPKDTAATFQSVDGSPQAEQSPLEST. Position 24 is a phosphoserine (Ser24). A Phosphothreonine modification is found at Thr28. A compositionally biased stretch (polar residues) spans 54–72; the sequence is ATFQSVDGSPQAEQSPLES. Residues Ser58, Ser62, and Ser68 each carry the phosphoserine modification. Thr84 bears the Phosphothreonine mark. The C3HC-type zinc-finger motif lies at 102–156; it reads CAKYGWVTVECDMLKCSSCQAFLCASLQPTFDFGRYKERCAELKKSLCSAHEKFC. The tract at residues 302 to 421 is disordered; it reads SPIPGVEGRP…TSPRSFFDPT (120 aa). Residues Ser320 and Ser328 each carry the phosphoserine modification. Over residues 326 to 338 the composition is skewed to polar residues; the sequence is TRSQDATVSPGSE. Position 332 is a phosphothreonine (Thr332). Phosphoserine is present on residues Ser334, Ser337, Ser343, Ser353, Ser358, Ser369, and Ser380. 2 stretches are compositionally biased toward polar residues: residues 350–359 and 369–383; these read RTRSWESSSP and SPTT…SMGT. At Thr383 the chain carries Phosphothreonine. Phosphoserine is present on Ser394. A Nuclear localization signal motif is present at residues 395 to 401; that stretch reads PLRRTKR. Phosphoserine is present on residues Ser406 and Ser482. Positions 406–420 are enriched in low complexity; sequence SSSSSDTSPRSFFDP.

Interacts with TPR; this interaction mediates ZC3HC1 nuclear envelopes (NE)-association but also required for proper positioning of a substantial amount of TPR at the nuclear basket (NB). Post-translationally, phosphorylated. May also be weakly phosphorylated on Tyr residues.

It is found in the nucleus. The protein resides in the nucleus envelope. Its function is as follows. Required for proper positioning of a substantial amount of TPR at the nuclear basket (NB) through interaction with TPR. In Mus musculus (Mouse), this protein is Zinc finger C3HC-type protein 1 (Zc3hc1).